Consider the following 167-residue polypeptide: Xanthine-guanine phosphoribosyltransferase (167 aa).

Residues 47–48, Q79, and 102–110 each bind 5-phospho-alpha-D-ribose 1-diphosphate; these read RG and DDLVDSGKT. GMP is bound at residue Q79. D103 contacts Mg(2+). Guanine-binding residues include D106 and I149. Residues D106 and I149 each coordinate xanthine. GMP contacts are provided by residues 106 to 110 and 148 to 149; these read DSGKT and WI.

Belongs to the purine/pyrimidine phosphoribosyltransferase family. XGPT subfamily. As to quaternary structure, homotetramer. It depends on Mg(2+) as a cofactor.

Its subcellular location is the cell inner membrane. It catalyses the reaction GMP + diphosphate = guanine + 5-phospho-alpha-D-ribose 1-diphosphate. It carries out the reaction XMP + diphosphate = xanthine + 5-phospho-alpha-D-ribose 1-diphosphate. The catalysed reaction is IMP + diphosphate = hypoxanthine + 5-phospho-alpha-D-ribose 1-diphosphate. Its pathway is purine metabolism; GMP biosynthesis via salvage pathway; GMP from guanine: step 1/1. The protein operates within purine metabolism; XMP biosynthesis via salvage pathway; XMP from xanthine: step 1/1. In terms of biological role, purine salvage pathway enzyme that catalyzes the transfer of the ribosyl-5-phosphate group from 5-phospho-alpha-D-ribose 1-diphosphate (PRPP) to the N9 position of the 6-oxopurines guanine and xanthine to form the corresponding ribonucleotides GMP (guanosine 5'-monophosphate) and XMP (xanthosine 5'-monophosphate), with the release of PPi. To a lesser extent, also acts on hypoxanthine. This Cereibacter sphaeroides (strain ATCC 17025 / ATH 2.4.3) (Rhodobacter sphaeroides) protein is Xanthine-guanine phosphoribosyltransferase.